A 223-amino-acid polypeptide reads, in one-letter code: Trichome differentiation protein GL1 (223 aa).

2 consecutive HTH myb-type domains span residues 11–63 and 64–118; these read NQEY…MNYL and SPNV…SKKL. 2 consecutive DNA-binding regions (H-T-H motif) follow at residues 39–63 and 91–114; these read WNRIVRKTGLKRCGKSCRLRWMNYL and WSLIAKRVPGRTDNQVKNYWNTHL.

It localises to the nucleus. Its function is as follows. Regulates the production of a signal that induces hair (trichome) precursor cells on leaf primordia to differentiate. This is Trichome differentiation protein GL1 (GL1) from Arabidopsis lyrata (Lyre-leaved rock-cress).